An 85-amino-acid polypeptide reads, in one-letter code: MTNIGSLLVDAATLMVTGMAVVFIFLTILVYLVRLLSKLVPEEVPEPIAAPKTNTRVQSTSSAVSPQVVAAISAAIHQHRASIAK.

A helical transmembrane segment spans residues 11–33 (AATLMVTGMAVVFIFLTILVYLV).

The protein belongs to the OadG family. As to quaternary structure, heterotrimer of an alpha, a beta and a gamma subunit. Requires Na(+) as cofactor.

Its subcellular location is the cell membrane. The catalysed reaction is oxaloacetate + 2 Na(+)(in) + H(+) = pyruvate + 2 Na(+)(out) + CO2. Its function is as follows. Catalyzes the decarboxylation of oxaloacetate coupled to Na(+) translocation. This Vibrio parahaemolyticus serotype O3:K6 (strain RIMD 2210633) protein is Probable oxaloacetate decarboxylase gamma chain.